Consider the following 450-residue polypeptide: Cytidylate cyclase (450 aa).

Residues 97 to 236 form the Guanylate cyclase domain; sequence VTMFVDIRKS…LPVDMTAKLQ (140 aa). Phe-100 is a binding site for a ribonucleoside 5'-triphosphate. The Mn(2+) site is built by Asp-102, Ile-103, and Asp-146. Positions 318–450 are AGS-C domain; sequence PNQFNFECFV…YRNIIGVYIK (133 aa).

This sequence belongs to the adenylyl cyclase class-4/guanylyl cyclase family. Pyrimidine cyclase subfamily. In terms of assembly, homodimer. It depends on Mn(2+) as a cofactor.

Its subcellular location is the cytoplasm. It carries out the reaction CTP = 3',5'-cyclic CMP + diphosphate. With respect to regulation, in E.coli strain MG1655 transformed with both genes cCMP appears between 15 and 30 minutes after infection with phage T5 (at protein level). No cCMP accumulates in uninfected cells. Its function is as follows. Pycsar (pyrimidine cyclase system for antiphage resistance) provides immunity against bacteriophage. The pyrimidine cyclase (PycC) synthesizes cyclic nucleotides in response to infection; these serve as specific second messenger signals. The signal activates the adjacent effector, leading to bacterial cell death and abortive phage infection. A clade E Pycsar system. The pyrimidine cyclase gene of a two-gene Pycsar system, generates cyclic CMP (cCMP) from CTP in response to bacteriophage infection. Has little to no activity on ATP, GTP or UTP. Expression of this and adjacent effector EcPycTM (AC P0DV25) confers resistance to bacteriophage P1 and T5; expression of this gene alone does not confer resistance. When cells expressing the Pycsar system are infected by phage T5 at low multiplicity of infection (0.2 MOI) the culture survives, at 2.0 MOI bacteria enter growth arrest. The same cells enter growth arrest after exposure to 250 uM cCMP but not cUMP; thus the effector protein responds only to the cNMP produced by its cognate NTP cyclase. Some of the cells treated with cCMP have abnormal membrane protrusions. The sequence is that of Cytidylate cyclase from Escherichia coli.